A 335-amino-acid polypeptide reads, in one-letter code: Fructose-1,6-bisphosphatase class 1 1 (335 aa).

Mg(2+)-binding residues include Glu-92, Asp-114, Leu-116, and Asp-117. Substrate is bound by residues 117-120, Asn-209, and Lys-275; that span reads DGSS. A Mg(2+)-binding site is contributed by Glu-281.

The protein belongs to the FBPase class 1 family. In terms of assembly, homotetramer. Mg(2+) serves as cofactor.

It localises to the cytoplasm. The enzyme catalyses beta-D-fructose 1,6-bisphosphate + H2O = beta-D-fructose 6-phosphate + phosphate. It functions in the pathway carbohydrate biosynthesis; gluconeogenesis. In Polaromonas naphthalenivorans (strain CJ2), this protein is Fructose-1,6-bisphosphatase class 1 1.